Reading from the N-terminus, the 346-residue chain is Phosphoribosylformylglycinamidine cyclo-ligase (346 aa).

This sequence belongs to the AIR synthase family.

Its subcellular location is the cytoplasm. It carries out the reaction 2-formamido-N(1)-(5-O-phospho-beta-D-ribosyl)acetamidine + ATP = 5-amino-1-(5-phospho-beta-D-ribosyl)imidazole + ADP + phosphate + H(+). The protein operates within purine metabolism; IMP biosynthesis via de novo pathway; 5-amino-1-(5-phospho-D-ribosyl)imidazole from N(2)-formyl-N(1)-(5-phospho-D-ribosyl)glycinamide: step 2/2. The protein is Phosphoribosylformylglycinamidine cyclo-ligase of Geobacillus thermodenitrificans (strain NG80-2).